A 291-amino-acid polypeptide reads, in one-letter code: 2-C-methyl-D-erythritol 4-phosphate cytidylyltransferase (291 aa).

The segment at 1–23 (MTERDFDTPVETPTVQPAPAQGA) is disordered.

The protein belongs to the IspD/TarI cytidylyltransferase family. IspD subfamily.

It carries out the reaction 2-C-methyl-D-erythritol 4-phosphate + CTP + H(+) = 4-CDP-2-C-methyl-D-erythritol + diphosphate. It participates in isoprenoid biosynthesis; isopentenyl diphosphate biosynthesis via DXP pathway; isopentenyl diphosphate from 1-deoxy-D-xylulose 5-phosphate: step 2/6. Catalyzes the formation of 4-diphosphocytidyl-2-C-methyl-D-erythritol from CTP and 2-C-methyl-D-erythritol 4-phosphate (MEP). The protein is 2-C-methyl-D-erythritol 4-phosphate cytidylyltransferase of Bifidobacterium longum (strain DJO10A).